Reading from the N-terminus, the 533-residue chain is Retinoid isomerohydrolase (533 aa).

Ser2 carries the N-acetylserine modification. Phosphothreonine occurs at positions 101 and 105. A lipid anchor (S-palmitoyl cysteine; in membrane form) is attached at Cys112. Lys113 carries the N6-acetyllysine modification. Residue Ser117 is modified to Phosphoserine. A Fe cation-binding site is contributed by His180. Cys231 is lipidated: S-palmitoyl cysteine; in membrane form. Fe cation-binding residues include His241 and His313. 2 S-palmitoyl cysteine; in membrane form lipidation sites follow: Cys329 and Cys330. Fe cation is bound at residue His527.

Belongs to the carotenoid oxygenase family. In terms of assembly, interacts with MYO7A; this mediates light-dependent intracellular transport of RPE65. Fe(2+) serves as cofactor. Palmitoylation by LRAT regulates ligand binding specificity; the palmitoylated form (membrane form) specifically binds all-trans-retinyl-palmitate, while the soluble unpalmitoylated form binds all-trans-retinol (vitamin A). In terms of tissue distribution, retinal pigment epithelium specific.

The protein localises to the cytoplasm. Its subcellular location is the cell membrane. The protein resides in the microsome membrane. The enzyme catalyses an all-trans-retinyl ester + H2O = 11-cis-retinol + a fatty acid + H(+). The catalysed reaction is lutein = (3R,3'S)-zeaxanthin. It catalyses the reaction all-trans-retinyl hexadecanoate + H2O = 11-cis-retinol + hexadecanoate + H(+). Functionally, critical isomerohydrolase in the retinoid cycle involved in regeneration of 11-cis-retinal, the chromophore of rod and cone opsins. Catalyzes the cleavage and isomerization of all-trans-retinyl fatty acid esters to 11-cis-retinol which is further oxidized by 11-cis retinol dehydrogenase to 11-cis-retinal for use as visual chromophore. Essential for the production of 11-cis retinal for both rod and cone photoreceptors. Also capable of catalyzing the isomerization of lutein to meso-zeaxanthin an eye-specific carotenoid. The soluble form binds vitamin A (all-trans-retinol), making it available for LRAT processing to all-trans-retinyl ester. The membrane form, palmitoylated by LRAT, binds all-trans-retinyl esters, making them available for IMH (isomerohydrolase) processing to all-cis-retinol. The soluble form is regenerated by transferring its palmitoyl groups onto 11-cis-retinol, a reaction catalyzed by LRAT. The sequence is that of Retinoid isomerohydrolase (RPE65) from Bos taurus (Bovine).